The following is a 218-amino-acid chain: MSDNDELQQIAHLRREYTKGGLRRRDLPADPLTLFERWLSQACEAKLADPTAMVVATVDEHAQPYQRIVLLKHYDEKGMVFYTNLGSRKAHQIENNPRVSLLFPWHTLERQVMVIGKAERLSTLEVMKYFHSRPRDSQIGAWVSKQSSRISARGILESKFLELKQKFQQGEVPLPSFWGGFRISLEQIEFWQGGEHRLHDRFLYQRENDAWKIDRLAP.

Residues 14 to 17 (RREY) and K72 each bind substrate. FMN contacts are provided by residues 67–72 (RIVLLK), 82–83 (YT), R88, K89, and Q111. 3 residues coordinate substrate: Y129, R133, and S137. Residues 146–147 (QS) and W191 contribute to the FMN site. 197–199 (RLH) serves as a coordination point for substrate. R201 is a binding site for FMN.

Belongs to the pyridoxamine 5'-phosphate oxidase family. As to quaternary structure, homodimer. Requires FMN as cofactor.

It carries out the reaction pyridoxamine 5'-phosphate + O2 + H2O = pyridoxal 5'-phosphate + H2O2 + NH4(+). It catalyses the reaction pyridoxine 5'-phosphate + O2 = pyridoxal 5'-phosphate + H2O2. It functions in the pathway cofactor metabolism; pyridoxal 5'-phosphate salvage; pyridoxal 5'-phosphate from pyridoxamine 5'-phosphate: step 1/1. Its pathway is cofactor metabolism; pyridoxal 5'-phosphate salvage; pyridoxal 5'-phosphate from pyridoxine 5'-phosphate: step 1/1. Its function is as follows. Catalyzes the oxidation of either pyridoxine 5'-phosphate (PNP) or pyridoxamine 5'-phosphate (PMP) into pyridoxal 5'-phosphate (PLP). The protein is Pyridoxine/pyridoxamine 5'-phosphate oxidase of Escherichia coli O139:H28 (strain E24377A / ETEC).